A 450-amino-acid polypeptide reads, in one-letter code: Phosphoglucosamine mutase (450 aa).

Residue Ser-102 is the Phosphoserine intermediate of the active site. Mg(2+)-binding residues include Ser-102, Asp-243, Asp-245, and Asp-247. The residue at position 102 (Ser-102) is a Phosphoserine.

Belongs to the phosphohexose mutase family. The cofactor is Mg(2+). In terms of processing, activated by phosphorylation.

The catalysed reaction is alpha-D-glucosamine 1-phosphate = D-glucosamine 6-phosphate. In terms of biological role, catalyzes the conversion of glucosamine-6-phosphate to glucosamine-1-phosphate. The protein is Phosphoglucosamine mutase of Rhizobium meliloti (strain 1021) (Ensifer meliloti).